The following is a 450-amino-acid chain: Salicylate synthase (450 aa).

The Proton donor role is filled by Glu252. 270-271 (GT) contributes to the substrate binding site. Glu297 contributes to the Mg(2+) binding site. Substrate contacts are provided by residues Tyr385, Arg405, and 419–421 (GAG). Residues Glu431 and Glu434 each coordinate Mg(2+). Lys438 provides a ligand contact to substrate.

Belongs to the anthranilate synthase component I family. Salicylate synthase subfamily. Monomer. It depends on Mg(2+) as a cofactor.

It carries out the reaction chorismate = isochorismate. It catalyses the reaction isochorismate = salicylate + pyruvate. The enzyme catalyses chorismate = prephenate. The protein operates within siderophore biosynthesis; mycobactin biosynthesis. Functionally, involved in the incorporation of salicylate into the virulence-conferring salicylate-based siderophore mycobactin. Catalyzes the initial conversion of chorismate to yield the intermediate isochorismate (isochorismate synthase activity), and the subsequent elimination of the enolpyruvyl side chain in a lyase reaction to give salicylate (isochorismate pyruvate-lyase activity). In the absence of magnesium, MbtI displays a chorismate mutase activity and converts chorismate to prephenate. In Mycobacterium bovis (strain ATCC BAA-935 / AF2122/97), this protein is Salicylate synthase (mbtI).